Here is a 263-residue protein sequence, read N- to C-terminus: N-acetylgalactosamine permease IID component (263 aa).

In terms of domain architecture, PTS EIID spans 3 to 263 (SEISKKDITR…SIVCSAFGIL (261 aa)). The next 6 membrane-spanning stretches (helical) occupy residues 61 to 81 (LEFINTHPNLVGFLMGLLISM), 98 to 118 (LFGPIAGIGDAIFWFTLLPIM), 131 to 151 (LLGPILFFAVYLLIFFLRVGW), 178 to 198 (TILGITVIGGLIASYVHINVV), 215 to 235 (FFDKVFPNILPMAYTLLMYYF), and 243 to 263 (PVLLIGVTFVLSIVCSAFGIL).

Its subcellular location is the cell inner membrane. Functionally, the phosphoenolpyruvate-dependent sugar phosphotransferase system (PTS), a major carbohydrate active -transport system, catalyzes the phosphorylation of incoming sugar substrates concomitant with their translocation across the cell membrane. This system is involved in N-acetylgalactosamine transport. In Escherichia coli (strain K12), this protein is N-acetylgalactosamine permease IID component (agaD).